The following is a 424-amino-acid chain: Serine--tRNA ligase (424 aa).

Residue 231–233 coordinates L-serine; it reads TAE. 262 to 264 contacts ATP; that stretch reads RAE. Glutamate 285 provides a ligand contact to L-serine. 349–352 lines the ATP pocket; that stretch reads EISS. Residue serine 385 coordinates L-serine.

It belongs to the class-II aminoacyl-tRNA synthetase family. Type-1 seryl-tRNA synthetase subfamily. Homodimer. The tRNA molecule binds across the dimer.

It is found in the cytoplasm. The enzyme catalyses tRNA(Ser) + L-serine + ATP = L-seryl-tRNA(Ser) + AMP + diphosphate + H(+). The catalysed reaction is tRNA(Sec) + L-serine + ATP = L-seryl-tRNA(Sec) + AMP + diphosphate + H(+). Its pathway is aminoacyl-tRNA biosynthesis; selenocysteinyl-tRNA(Sec) biosynthesis; L-seryl-tRNA(Sec) from L-serine and tRNA(Sec): step 1/1. Functionally, catalyzes the attachment of serine to tRNA(Ser). Is also able to aminoacylate tRNA(Sec) with serine, to form the misacylated tRNA L-seryl-tRNA(Sec), which will be further converted into selenocysteinyl-tRNA(Sec). The polypeptide is Serine--tRNA ligase (Geobacillus kaustophilus (strain HTA426)).